We begin with the raw amino-acid sequence, 119 residues long: Large ribosomal subunit protein uL18 (119 aa).

The protein belongs to the universal ribosomal protein uL18 family. As to quaternary structure, part of the 50S ribosomal subunit; part of the 5S rRNA/L5/L18/L25 subcomplex. Contacts the 5S and 23S rRNAs.

In terms of biological role, this is one of the proteins that bind and probably mediate the attachment of the 5S RNA into the large ribosomal subunit, where it forms part of the central protuberance. The sequence is that of Large ribosomal subunit protein uL18 from Nitrosomonas europaea (strain ATCC 19718 / CIP 103999 / KCTC 2705 / NBRC 14298).